Consider the following 247-residue polypeptide: MSGKDRIEIFPSRMAQTIMKARLKGAQTGRNLLKKKSDALTLRFRQILKKIIETKMLMGEVMREAAFSLAEAKFTAGDFSTTAIQNVNKAQVKIRAKKDNVAGVTLPVFEHYHEGTDSYELTGLARGGEQLAKLKRNYAKAVELLVELASLQTSFVTLDEAIKITNRRVNAIEHVIIPRIERTLAYIITELDEREREEFYRLKKIQEKKKILKEKSEKDLEQRRAAGEVMEPANLLAEEKDEDLLFE.

This sequence belongs to the V-ATPase D subunit family. V-ATPase is a heteromultimeric enzyme made up of two complexes: the ATP-hydrolytic V1 complex and the proton translocation V0 complex. The V1 complex consists of three catalytic AB heterodimers that form a heterohexamer, three peripheral stalks each consisting of EG heterodimers, one central rotor including subunits D and F, and the regulatory subunits C and H. The proton translocation complex V0 consists of the proton transport subunit a, a ring of proteolipid subunits c9c'', rotary subunit d, subunits e and f, and the accessory subunits ATP6AP1/Ac45 and ATP6AP2/PRR. Interacts with SNX10.

The protein localises to the membrane. Its subcellular location is the cytoplasmic vesicle. It localises to the clathrin-coated vesicle membrane. It is found in the cytoplasm. The protein resides in the cytoskeleton. The protein localises to the microtubule organizing center. Its subcellular location is the centrosome. It localises to the cell projection. It is found in the cilium. Subunit of the V1 complex of vacuolar(H+)-ATPase (V-ATPase), a multisubunit enzyme composed of a peripheral complex (V1) that hydrolyzes ATP and a membrane integral complex (V0) that translocates protons. V-ATPase is responsible for acidifying and maintaining the pH of intracellular compartments and in some cell types, is targeted to the plasma membrane, where it is responsible for acidifying the extracellular environment. May play a role in cilium biogenesis through regulation of the transport and the localization of proteins to the cilium. The sequence is that of V-type proton ATPase subunit D (ATP6V1D) from Oryctolagus cuniculus (Rabbit).